Consider the following 339-residue polypeptide: DNA-directed RNA polymerase subunit alpha (339 aa).

Positions 1–235 are alpha N-terminal domain (alpha-NTD); the sequence is MVIQRNWQSL…DQLQLFINFE (235 aa). Positions 251–339 are alpha C-terminal domain (alpha-CTD); sequence FNRNLLRKVD…DLAKRLEEPF (89 aa).

It belongs to the RNA polymerase alpha chain family. As to quaternary structure, homodimer. The RNAP catalytic core consists of 2 alpha, 1 beta, 1 beta' and 1 omega subunit. When a sigma factor is associated with the core the holoenzyme is formed, which can initiate transcription.

It carries out the reaction RNA(n) + a ribonucleoside 5'-triphosphate = RNA(n+1) + diphosphate. In terms of biological role, DNA-dependent RNA polymerase catalyzes the transcription of DNA into RNA using the four ribonucleoside triphosphates as substrates. The protein is DNA-directed RNA polymerase subunit alpha of Granulibacter bethesdensis (strain ATCC BAA-1260 / CGDNIH1).